Consider the following 35-residue polypeptide: Sorbin and SH3 domain-containing protein 1 (35 aa).

The region spanning 1–8 is the SoHo domain; it reads LNRDDDSD. At S15 the chain carries Phosphoserine. Positions 22–35 constitute an SH3 domain; the sequence is CDDGWFVGTSRRTK.

As to quaternary structure, interacts with the long isoform of AFDN and with VCL. AFDN and VCL bind to SORBS1 in a competitive manner and do not form a ternary complex. Interacts with ABL1, CBL, CBLB and INPPL1/SHIP2 through the third SH3 domain. Interaction with ABL1 occurs only after insulin stimulation while this has no effect on the interaction with INPPL1. Interacts with the insulin receptor but dissociates from it following insulin stimulation. Also interacts with SCA7, PTK2/FAK1 and flotillin. Interacts (via SH3 domain 2) with PXN. Interacts (via third SH3 domain) with the Ten-1 ICD form of TENM1; the interaction induces the translocation of SORBS1 to the nucleus. Post-translationally, O-glycosylated.

Its subcellular location is the cell junction. The protein localises to the adherens junction. The protein resides in the cell membrane. It localises to the cytoplasm. It is found in the cytoskeleton. Its subcellular location is the focal adhesion. The protein localises to the nucleus. The protein resides in the nucleus matrix. Its function is as follows. Plays a role in tyrosine phosphorylation of CBL by linking CBL to the insulin receptor. Required for insulin-stimulated glucose transport. Involved in formation of actin stress fibers and focal adhesions. The protein is Sorbin and SH3 domain-containing protein 1 of Rattus norvegicus (Rat).